We begin with the raw amino-acid sequence, 805 residues long: Mitochondrial intermediate peptidase (805 aa).

A mitochondrion-targeting transit peptide spans 1–25; the sequence is MIQPLVKASRPRLWVCSDCLLRRTL. His578 lines the Zn(2+) pocket. Residue Glu579 is part of the active site. The Zn(2+) site is built by His582 and His585.

It belongs to the peptidase M3 family. Zn(2+) serves as cofactor.

The protein resides in the mitochondrion matrix. The enzyme catalyses Release of an N-terminal octapeptide as second stage of processing of some proteins imported into the mitochondrion.. Cleaves proteins, imported into the mitochondrion, to their mature size. While most mitochondrial precursor proteins are processed to the mature form in one step by mitochondrial processing peptidase (MPP), the sequential cleavage by MIP of an octapeptide after initial processing by MPP is a required step for a subgroup of nuclear-encoded precursor proteins destined for the matrix or the inner membrane. The protein is Mitochondrial intermediate peptidase (oct-1) of Neurospora crassa (strain ATCC 24698 / 74-OR23-1A / CBS 708.71 / DSM 1257 / FGSC 987).